A 340-amino-acid polypeptide reads, in one-letter code: 4-amino-5-hydroxymethyl-2-methylpyrimidine phosphate synthase THI13 (340 aa).

Residue Lys-62 is modified to N6-(pyridoxal phosphate)lysine. Residue His-66 is part of the active site. Residue 115-118 participates in pyridoxal 5'-phosphate binding; it reads GEFG. The CCCFC; essential for catalytic activity, may be the site of iron coordination signature appears at 195–199; the sequence is CCCFC.

Belongs to the NMT1/THI5 family. In terms of assembly, homodimer. Fe cation serves as cofactor.

The enzyme catalyses N(6)-(pyridoxal phosphate)-L-lysyl-[4-amino-5-hydroxymethyl-2-methylpyrimidine phosphate synthase] + L-histidyl-[4-amino-5-hydroxymethyl-2-methylpyrimidine phosphate synthase] + 2 Fe(3+) + 4 H2O = L-lysyl-[4-amino-5-hydroxymethyl-2-methylpyrimidine phosphate synthase] + (2S)-2-amino-5-hydroxy-4-oxopentanoyl-[4-amino-5-hydroxymethyl-2-methylpyrimidine phosphate synthase] + 4-amino-2-methyl-5-(phosphooxymethyl)pyrimidine + 3-oxopropanoate + 2 Fe(2+) + 2 H(+). It functions in the pathway cofactor biosynthesis; thiamine diphosphate biosynthesis. Functionally, responsible for the formation of the pyrimidine heterocycle in the thiamine biosynthesis pathway. Catalyzes the formation of hydroxymethylpyrimidine phosphate (HMP-P) from histidine and pyridoxal phosphate (PLP). The protein uses PLP and the active site histidine to form HMP-P, generating an inactive enzyme. The enzyme can only undergo a single turnover, which suggests it is a suicide enzyme. The polypeptide is 4-amino-5-hydroxymethyl-2-methylpyrimidine phosphate synthase THI13 (Saccharomyces cerevisiae (strain ATCC 204508 / S288c) (Baker's yeast)).